A 743-amino-acid polypeptide reads, in one-letter code: Putative pre-mRNA-splicing factor ATP-dependent RNA helicase DHX32 (743 aa).

Met1 is subject to N-acetylmethionine. Positions Met1–Asp28 are disordered. In terms of domain architecture, Helicase ATP-binding spans Met72 to Lys238. Residue Gly85 to Ser92 participates in ATP binding. Positions Asp185 to His188 match the DEAH box motif.

Belongs to the DEAD box helicase family. DEAH subfamily. In terms of tissue distribution, expressed in lymphoid tissues (at protein level). Expressed in brain, heart, skeletal muscle, colon, thymus, spleen, kidney, liver, small intestine, placenta, lung, lymphoid tissues and blood leukocytes.

The protein localises to the nucleus. Its subcellular location is the mitochondrion. The catalysed reaction is ATP + H2O = ADP + phosphate + H(+). This is Putative pre-mRNA-splicing factor ATP-dependent RNA helicase DHX32 (DHX32) from Homo sapiens (Human).